Here is a 323-residue protein sequence, read N- to C-terminus: Fructose-1,6-bisphosphatase class 1 (323 aa).

Mg(2+) is bound by residues glutamate 88, aspartate 107, leucine 109, and aspartate 110. Substrate contacts are provided by residues 110-113 (DGSS) and asparagine 200. Position 272 (glutamate 272) interacts with Mg(2+).

This sequence belongs to the FBPase class 1 family. In terms of assembly, homotetramer. It depends on Mg(2+) as a cofactor.

It is found in the cytoplasm. The enzyme catalyses beta-D-fructose 1,6-bisphosphate + H2O = beta-D-fructose 6-phosphate + phosphate. Its pathway is carbohydrate biosynthesis; gluconeogenesis. The protein is Fructose-1,6-bisphosphatase class 1 of Acinetobacter baumannii (strain AYE).